Consider the following 141-residue polypeptide: Succinate dehydrogenase [ubiquinone] cytochrome b small subunit 2 (141 aa).

The transit peptide at 1-24 directs the protein to the mitochondrion; it reads MSLIRCTTSKALKFRQLLKMAART. Topologically, residues 25–44 are mitochondrial matrix; the sequence is SVTTPVSREPFSIEDHSLHF. A helical membrane pass occupies residues 45-63; that stretch reads KIERYWAAGMIPLIPTAYF. Residues 64–68 lie on the Mitochondrial intermembrane side of the membrane; sequence IHTPA. Residues 69 to 89 traverse the membrane as a helical segment; sequence MDAVLTVAIVLHVHWGIAGVV. His80 lines the heme b pocket. Over 90–104 the chain is Mitochondrial matrix; sequence SDYARPFVIGDTLAR. Residue Tyr92 participates in a ubiquinone binding. Residues 105–126 form a helical membrane-spanning segment; sequence VARASVYIITVILLASLLHFNN. At 127–141 the chain is on the mitochondrial intermembrane side; that stretch reads SDVGLTKAFEMVWSL.

Belongs to the CybS family. In terms of assembly, component of the mitochondrial electron transport chain complex II composed of four subunits: a flavoprotein (Fp), an iron-sulfur protein (Ip), and a large cytochrome b (CybL) subunit and a small cytochrome b (CybS) subunit. There are 2 developmental stage-specific forms of complex II which have the Ip and CybL subunits in common. Complex II from the free-living larvae (aerobic environment) acts as a succinate dehydrogenase and is composed of the common subunit Ip and CybL and the stage specific subunits FpL and CybSL. Complex II from parasitic larvae and adults (anaerobic environment) acts as a fumarate reductase and is composed of the common subunit Ip and CybL and the stage specific subunits FpA and CybSA. The cofactor is heme b.

Its subcellular location is the mitochondrion inner membrane. It participates in carbohydrate metabolism; tricarboxylic acid cycle; fumarate from succinate (eukaryal route): step 1/1. Membrane-bound small subunit (CybS) of the mitochondrial electron transport chain complex II, which together with the membrane-bound large subunit (CybL), anchor the catalytic subunits to the inner mitochondria membrane. During the free-living egg-larvae stages, which occur in an aerobic environment, complex II acts as a succinate dehydrogenase by transferring electrons from succinate to ubiquinone. This is Succinate dehydrogenase [ubiquinone] cytochrome b small subunit 2 from Ascaris suum (Pig roundworm).